Reading from the N-terminus, the 787-residue chain is Protein FAM149A (787 aa).

7 disordered regions span residues 22–105 (SPAV…SSGA), 144–175 (GSNSVTASSPRNPRQLRAPGEREPSVWMAPGP), 189–226 (EEWTSDSDSQDDPEGRGLSEGLRKQSSEKSKDPLPTNF), 238–284 (ASES…SWRD), 432–455 (DGDEHLGQSPALRGRKRHRHGLPP), 573–602 (LQQRPTYSADRTQNDQDDKLPGGGVGASSR), and 665–697 (AVQTSRSRLPPIGSETGEPNTAASGSRPVSYRG). Positions 37–46 (SVDSGASTSL) are enriched in polar residues. Low complexity-rich tracts occupy residues 51–65 (TLTLLPSLPPDTAAS) and 96–105 (SGSLPSSSGA). Residues 144–155 (GSNSVTASSPRN) show a composition bias toward polar residues. The segment covering 189-200 (EEWTSDSDSQDD) has biased composition (acidic residues). Over residues 201-220 (PEGRGLSEGLRKQSSEKSKD) the composition is skewed to basic and acidic residues. The segment covering 239 to 250 (SESPSSFSSSGS) has biased composition (low complexity). Over residues 251–261 (RTPTEAHNSWP) the composition is skewed to polar residues. Residues 262–274 (GSSTQSSTTGLST) show a composition bias toward low complexity.

The protein belongs to the FAM149 family.

The chain is Protein FAM149A (Fam149a) from Mus musculus (Mouse).